We begin with the raw amino-acid sequence, 179 residues long: Large ribosomal subunit protein uL5 (179 aa).

The protein belongs to the universal ribosomal protein uL5 family. In terms of assembly, part of the 50S ribosomal subunit; part of the 5S rRNA/L5/L18/L25 subcomplex. Contacts the 5S rRNA and the P site tRNA. Forms a bridge to the 30S subunit in the 70S ribosome.

This is one of the proteins that bind and probably mediate the attachment of the 5S RNA into the large ribosomal subunit, where it forms part of the central protuberance. In the 70S ribosome it contacts protein S13 of the 30S subunit (bridge B1b), connecting the 2 subunits; this bridge is implicated in subunit movement. Contacts the P site tRNA; the 5S rRNA and some of its associated proteins might help stabilize positioning of ribosome-bound tRNAs. The sequence is that of Large ribosomal subunit protein uL5 from Geotalea daltonii (strain DSM 22248 / JCM 15807 / FRC-32) (Geobacter daltonii).